A 334-amino-acid polypeptide reads, in one-letter code: Methionyl-tRNA formyltransferase (334 aa).

Position 111–114 (111–114 (SILP)) interacts with (6S)-5,6,7,8-tetrahydrofolate.

This sequence belongs to the Fmt family.

It carries out the reaction L-methionyl-tRNA(fMet) + (6R)-10-formyltetrahydrofolate = N-formyl-L-methionyl-tRNA(fMet) + (6S)-5,6,7,8-tetrahydrofolate + H(+). Functionally, attaches a formyl group to the free amino group of methionyl-tRNA(fMet). The formyl group appears to play a dual role in the initiator identity of N-formylmethionyl-tRNA by promoting its recognition by IF2 and preventing the misappropriation of this tRNA by the elongation apparatus. This is Methionyl-tRNA formyltransferase from Gloeothece citriformis (strain PCC 7424) (Cyanothece sp. (strain PCC 7424)).